Here is an 89-residue protein sequence, read N- to C-terminus: DNA-directed RNA polymerase subunit omega (89 aa).

It belongs to the RNA polymerase subunit omega family. The RNAP catalytic core consists of 2 alpha, 1 beta, 1 beta' and 1 omega subunit. When a sigma factor is associated with the core the holoenzyme is formed, which can initiate transcription.

The enzyme catalyses RNA(n) + a ribonucleoside 5'-triphosphate = RNA(n+1) + diphosphate. Functionally, promotes RNA polymerase assembly. Latches the N- and C-terminal regions of the beta' subunit thereby facilitating its interaction with the beta and alpha subunits. In Idiomarina loihiensis (strain ATCC BAA-735 / DSM 15497 / L2-TR), this protein is DNA-directed RNA polymerase subunit omega.